Here is a 257-residue protein sequence, read N- to C-terminus: tRNA (guanine-N(7)-)-methyltransferase (257 aa).

Residues 1–12 (MARDSEDQDMET) are compositionally biased toward acidic residues. The disordered stretch occupies residues 1–25 (MARDSEDQDMETETNGAAEGLDPTS). S-adenosyl-L-methionine is bound by residues Gly-80, 103–104 (EI), 138–139 (NA), and Leu-158. Asp-161 is a catalytic residue. Position 236–238 (236–238 (SEE)) interacts with S-adenosyl-L-methionine.

This sequence belongs to the class I-like SAM-binding methyltransferase superfamily. TrmB family.

It is found in the nucleus. The enzyme catalyses guanosine(46) in tRNA + S-adenosyl-L-methionine = N(7)-methylguanosine(46) in tRNA + S-adenosyl-L-homocysteine. It participates in tRNA modification; N(7)-methylguanine-tRNA biosynthesis. Functionally, catalyzes the formation of N(7)-methylguanine at position 46 (m7G46) in tRNA. The sequence is that of tRNA (guanine-N(7)-)-methyltransferase from Drosophila ananassae (Fruit fly).